The following is a 1052-amino-acid chain: ATP-dependent DNA helicase MPH1 (1052 aa).

The 168-residue stretch at 89-256 folds into the Helicase ATP-binding domain; the sequence is IVRKGLLQNI…EVVNNLNISK (168 aa). Residue 102–109 participates in ATP binding; sequence IPTGMGKT. Residues 204-207 carry the DEAH box motif; that stretch reads DEAH. Residues 432–649 form the Helicase C-terminal domain; sequence ELTQFFYENP…HLVQYRKSDR (218 aa). 4 disordered regions span residues 495-550, 798-832, 869-898, and 1002-1052; these read HGPK…NQKQ, IGDT…DLPL, SKRQ…QPEV, and HTVS…DSDF. Over residues 503–532 the composition is skewed to basic and acidic residues; the sequence is SDREKRLEEERRMDEEKKQAALQEKLERTS. Polar residues predominate over residues 534-549; the sequence is RTGSSEEAQLSGMNQK. Low complexity-rich tracts occupy residues 875–898 and 1005–1028; these read QPEV…QPEV and SQSQ…QQAS. Over residues 1029–1040 the composition is skewed to basic and acidic residues; it reads QKDRSSQDKDLT. Residues 1043–1052 show a composition bias toward acidic residues; the sequence is ELEDLLDSDF.

It belongs to the DEAD box helicase family. DEAH subfamily. FANCM sub-subfamily. As to quaternary structure, interacts with the MHF histone-fold complex to form the FANCM-MHF complex.

The protein resides in the nucleus. The catalysed reaction is ATP + H2O = ADP + phosphate + H(+). Functionally, ATP-dependent DNA helicase involved in DNA damage repair by homologous recombination and in genome maintenance. Capable of unwinding D-loops. Plays a role in limiting crossover recombinants during mitotic DNA double-strand break (DSB) repair. Component of a FANCM-MHF complex which promotes gene conversion at blocked replication forks, probably by reversal of the stalled fork. The chain is ATP-dependent DNA helicase MPH1 from Candida glabrata (strain ATCC 2001 / BCRC 20586 / JCM 3761 / NBRC 0622 / NRRL Y-65 / CBS 138) (Yeast).